Consider the following 87-residue polypeptide: Virulence protein PagD (87 aa).

Positions 1-20 are cleaved as a signal peptide; sequence MKHHAFMLWSLLIFSFHVLA. The segment at 46-87 is disordered; that stretch reads QPPTNTDKKQARQISSPSCPTTKPMMSAPVNDARKGNTFSRT. Positions 57-66 are enriched in polar residues; sequence RQISSPSCPT.

Functionally, putative function in virulence. Could be involved in promoting S.typhimurium survival within macrophages. This is Virulence protein PagD (pagD) from Salmonella typhimurium (strain LT2 / SGSC1412 / ATCC 700720).